Reading from the N-terminus, the 32-residue chain is Hainantoxin F8-35.23 (32 aa).

As to expression, expressed by the venom gland.

The protein resides in the secreted. This Cyriopagopus hainanus (Chinese bird spider) protein is Hainantoxin F8-35.23.